We begin with the raw amino-acid sequence, 142 residues long: Large ribosomal subunit protein uL11 (142 aa).

The protein belongs to the universal ribosomal protein uL11 family. As to quaternary structure, part of the ribosomal stalk of the 50S ribosomal subunit. Interacts with L10 and the large rRNA to form the base of the stalk. L10 forms an elongated spine to which L12 dimers bind in a sequential fashion forming a multimeric L10(L12)X complex. One or more lysine residues are methylated.

Functionally, forms part of the ribosomal stalk which helps the ribosome interact with GTP-bound translation factors. The chain is Large ribosomal subunit protein uL11 from Vibrio campbellii (strain ATCC BAA-1116).